The primary structure comprises 643 residues: Immediate-early phosphoprotein 57 (643 aa).

Disordered regions lie at residues 1–180 (MAQK…GGCA) and 194–329 (TGWG…QCPP). The span at 24–52 (LDFSESEEEEEEEESSSESESDEDSDMEV) shows a compositional bias: acidic residues. 2 stretches are compositionally biased toward low complexity: residues 57-71 (QEAG…QPQQ) and 83-100 (QQPQ…QQQR). Basic and acidic residues predominate over residues 103-113 (KRGEESGDARP). The span at 162 to 171 (QQPQSQAAQP) shows a compositional bias: low complexity. A compositionally biased stretch (basic and acidic residues) spans 215-241 (RRGDEDRRSGRDRRRREGRERDRESRS). Residues 284–297 (AGPSQAQAAQAARA) are compositionally biased toward low complexity. Basic and acidic residues predominate over residues 298-307 (PRQEQGERRQ). Pro residues predominate over residues 320–329 (QQCPPQQCPP).

The protein belongs to the herpesviridae UL69 family.

This chain is Immediate-early phosphoprotein 57 (57), found in Equus caballus (Horse).